A 114-amino-acid chain; its full sequence is MICOS complex subunit MIC12 (114 aa).

A helical transmembrane segment spans residues 4-26; sequence IAKLGSFTLVSGVVATSCYYYFI.

It belongs to the MICOS complex subunit Mic12 family. Component of the mitochondrial contact site and cristae organizing system (MICOS) complex.

It is found in the mitochondrion inner membrane. Component of the MICOS complex, a large protein complex of the mitochondrial inner membrane that plays crucial roles in the maintenance of crista junctions, inner membrane architecture, and formation of contact sites to the outer membrane. This Candida glabrata (strain ATCC 2001 / BCRC 20586 / JCM 3761 / NBRC 0622 / NRRL Y-65 / CBS 138) (Yeast) protein is MICOS complex subunit MIC12 (AIM5).